The following is a 473-amino-acid chain: ATP synthase subunit beta (473 aa).

ATP is bound at residue 153–160 (GGAGVGKT).

It belongs to the ATPase alpha/beta chains family. In terms of assembly, F-type ATPases have 2 components, CF(1) - the catalytic core - and CF(0) - the membrane proton channel. CF(1) has five subunits: alpha(3), beta(3), gamma(1), delta(1), epsilon(1). CF(0) has three main subunits: a(1), b(2) and c(9-12). The alpha and beta chains form an alternating ring which encloses part of the gamma chain. CF(1) is attached to CF(0) by a central stalk formed by the gamma and epsilon chains, while a peripheral stalk is formed by the delta and b chains.

It is found in the cell inner membrane. It carries out the reaction ATP + H2O + 4 H(+)(in) = ADP + phosphate + 5 H(+)(out). Functionally, produces ATP from ADP in the presence of a proton gradient across the membrane. The catalytic sites are hosted primarily by the beta subunits. The protein is ATP synthase subunit beta of Rickettsia massiliae (strain Mtu5).